The primary structure comprises 373 residues: Transmembrane protein adipocyte-associated 1 (373 aa).

N-linked (GlcNAc...) asparagine glycans are attached at residues Asn-11 and Asn-23. The next 7 helical transmembrane spans lie at 48-68 (LLLLIPNVLFLIFLLWKLPSA), 76-96 (SSPIFITFYILVFVVALVGIA), 123-143 (FFLLAIELSVIILGLAFGHLE), 151-171 (VLAITTVLSLAYSVTQGTLEI), 192-212 (QFWLVSSCFFFLVYSLVVILP), 234-254 (ILALLNLLQGLGSVLLCFDII), and 265-285 (FLYFSFFAPLIYVAFLRGFFG). N-linked (GlcNAc...) asparagine glycosylation occurs at Asn-361.

Belongs to the UPF0359 family. In terms of tissue distribution, ubiquitous, with higher levels in heart, placenta and kidney.

Its subcellular location is the membrane. The protein is Transmembrane protein adipocyte-associated 1 (TPRA1) of Homo sapiens (Human).